Consider the following 492-residue polypeptide: N-succinylglutamate 5-semialdehyde dehydrogenase (492 aa).

220-225 (GSAGTG) is an NAD(+) binding site. Catalysis depends on residues E243 and C277.

The protein belongs to the aldehyde dehydrogenase family. AstD subfamily.

The enzyme catalyses N-succinyl-L-glutamate 5-semialdehyde + NAD(+) + H2O = N-succinyl-L-glutamate + NADH + 2 H(+). It functions in the pathway amino-acid degradation; L-arginine degradation via AST pathway; L-glutamate and succinate from L-arginine: step 4/5. Functionally, catalyzes the NAD-dependent reduction of succinylglutamate semialdehyde into succinylglutamate. The sequence is that of N-succinylglutamate 5-semialdehyde dehydrogenase from Cronobacter sakazakii (strain ATCC BAA-894) (Enterobacter sakazakii).